The chain runs to 69 residues: Brevinin-1CG5 (69 aa).

The N-terminal stretch at 1–22 (MFTLKKSLLLLFFLGTINLSLC) is a signal peptide. Positions 23–43 (EQERNAEEERRDDDEMDVEVE) are cleaved as a propeptide — removed in mature form. A disulfide bridge connects residues cysteine 63 and cysteine 69.

Belongs to the frog skin active peptide (FSAP) family. Brevinin subfamily. In terms of tissue distribution, expressed by the skin glands.

It localises to the secreted. In terms of biological role, antimicrobial peptide active against a variety of Gram-positive and Gram-negative bacterial strains. Has antifungal activity against C.albicans ATCC 10231 and a slime mold isolate. Has hemolytic activity against human erythrocytes. The polypeptide is Brevinin-1CG5 (Amolops chunganensis (Chungan torrent frog)).